A 377-amino-acid polypeptide reads, in one-letter code: MSIRPWRHIERRKSRKIMVGNVAVGGDAPISVQTMTNTPTVDAQATIAQIKRCEAVGVDLIRVSCPDKESTAALKDIVRAAEVPIIADIHFHYKRALEAADAGAACLRINPGNIGSSERVAEVVRAAKANGCAIRIGVNAGSLEKELLEKYGEPCPDALVESALNHIKLLQDQDFHEFKVAVKASDVFLAVASYKALAKAVDCPLHLGITEAGGLIGGTVKSALGIGNLLWDGIGDTLRVSLSADPEQEVRVGYDILKTLDLRTRGVRVVSCPSCARQGFDVVKTVKALEERLAHIATPISLSILGCVVNGPGEARETDIGVTGGGQGKHMVFLSGVTDHTVEDAKMLDHIVSLVEAKAAEIEAEKAKEKAATVAAE.

4 residues coordinate [4Fe-4S] cluster: cysteine 272, cysteine 275, cysteine 307, and glutamate 314.

Belongs to the IspG family. [4Fe-4S] cluster is required as a cofactor.

The enzyme catalyses (2E)-4-hydroxy-3-methylbut-2-enyl diphosphate + oxidized [flavodoxin] + H2O + 2 H(+) = 2-C-methyl-D-erythritol 2,4-cyclic diphosphate + reduced [flavodoxin]. The protein operates within isoprenoid biosynthesis; isopentenyl diphosphate biosynthesis via DXP pathway; isopentenyl diphosphate from 1-deoxy-D-xylulose 5-phosphate: step 5/6. Converts 2C-methyl-D-erythritol 2,4-cyclodiphosphate (ME-2,4cPP) into 1-hydroxy-2-methyl-2-(E)-butenyl 4-diphosphate. The polypeptide is 4-hydroxy-3-methylbut-2-en-1-yl diphosphate synthase (flavodoxin) (Zymomonas mobilis subsp. mobilis (strain ATCC 31821 / ZM4 / CP4)).